Consider the following 235-residue polypeptide: Zorya protein ZorB (235 aa).

The chain crosses the membrane as a helical span at residues 25-44; the sequence is LMAGLMMVFMFISIAYMHYV. An OmpA-like domain is found at 87-225; sequence QTLEVRFKSP…RVTFKVVTNA (139 aa).

It belongs to the MotB family.

Its subcellular location is the cell inner membrane. Component of antiviral defense system Zorya type II, composed of ZorA, ZorB and ZorE. Expression of Zorya type II in E.coli (strain MG1655) confers resistance to phages SECphi7 and T7. While most T7 infected Zorya-containing cells undergo abortive infection, a minority produce viable phage progeny. These eventually accumulate to a high multiplicity of infection, leading to culture collapse by 170 minutes after initial infection. ZorA and ZorB probably assemble in the cell inner membrane and exert their effect there. The chain is Zorya protein ZorB from Escherichia coli (strain ATCC 8739 / DSM 1576 / NBRC 3972 / NCIMB 8545 / WDCM 00012 / Crooks).